A 269-amino-acid polypeptide reads, in one-letter code: Undecaprenyl-diphosphatase (269 aa).

The next 7 helical transmembrane spans lie at 40–59, 87–107, 116–136, 160–180, 188–208, 220–240, and 247–267; these read GITF…ALYF, WYII…EEPI, AIIA…DTLG, ALLP…FLGF, FSFL…VGHL, PLLI…ALLL, and SLYP…LFIF.

Belongs to the UppP family.

Its subcellular location is the cell inner membrane. It carries out the reaction di-trans,octa-cis-undecaprenyl diphosphate + H2O = di-trans,octa-cis-undecaprenyl phosphate + phosphate + H(+). In terms of biological role, catalyzes the dephosphorylation of undecaprenyl diphosphate (UPP). Confers resistance to bacitracin. The protein is Undecaprenyl-diphosphatase of Geobacter metallireducens (strain ATCC 53774 / DSM 7210 / GS-15).